Consider the following 357-residue polypeptide: 5-hydroxytryptamine receptor 5A (357 aa).

Residues 1–36 (MDLPVNLTSFSLSTPSPLETNHSLGKDDLRPSSPLL) are Extracellular-facing. Asparagine 6 and asparagine 21 each carry an N-linked (GlcNAc...) asparagine glycan. A helical membrane pass occupies residues 37 to 63 (SVFGVLILTLLGFLVAATFAWNLLVLA). Residues 64–76 (TILRVRTFHRVPH) lie on the Cytoplasmic side of the membrane. Residues 77–103 (NLVASMAVSDVLVAALVMPLSLVHELS) form a helical membrane-spanning segment. The Extracellular segment spans residues 104–114 (GRRWQLGRRLC). Cysteines 114 and 192 form a disulfide. The helical transmembrane segment at 115–137 (QLWIACDVLCCTASIWNVTAIAL) threads the bilayer. Aspartate 121 is a serotonin binding site. At 138–155 (DRYWSITRHMEYTLRTRK) the chain is on the cytoplasmic side. Residues 156 to 176 (CVSNVMIALTWALSAVISLAP) form a helical membrane-spanning segment. Residues 177–198 (LLFGWGETYSEGSEECQVSREP) lie on the Extracellular side of the membrane. The helical transmembrane segment at 199–220 (SYAVFSTVGAFYLPLCVVLFVY) threads the bilayer. The Cytoplasmic portion of the chain corresponds to 221–287 (WKIYKAAKFR…QKEQRAALMV (67 aa)). Residues 288-312 (GILIGVFVLCWIPFFLTELISPLCS) form a helical membrane-spanning segment. Over 313-314 (CD) the chain is Extracellular. Residues 315–339 (IPAIWKSIFLWLGYSNSFFNPLIYT) traverse the membrane as a helical segment. At 340 to 357 (AFNKNYNSAFKNFFSRQH) the chain is on the cytoplasmic side.

Belongs to the G-protein coupled receptor 1 family.

Its subcellular location is the cell membrane. G-protein coupled receptor for 5-hydroxytryptamine (serotonin), a biogenic hormone that functions as a neurotransmitter, a hormone and a mitogen. Also functions as a receptor for ergot alkaloid derivatives and other psychoactive substances. Ligand binding causes a conformation change that triggers signaling via guanine nucleotide-binding proteins (G proteins) and modulates the activity of downstream effectors. HTR5A is coupled to G(i)/G(o) G alpha proteins and mediates inhibitory neurotransmission: signaling inhibits adenylate cyclase activity and activates a phosphatidylinositol-calcium second messenger system that regulates the release of Ca(2+) ions from intracellular stores. This Homo sapiens (Human) protein is 5-hydroxytryptamine receptor 5A.